Consider the following 240-residue polypeptide: Ribosomal RNA large subunit methyltransferase E (240 aa).

Residues 1 to 20 (MSKAGGNKGGSRTGGRGGAG) are compositionally biased toward gly residues. Residues 1 to 33 (MSKAGGNKGGSRTGGRGGAGSSNLHVRVKKKAG) form a disordered region. S-adenosyl-L-methionine-binding residues include glycine 92, tryptophan 94, aspartate 115, aspartate 131, and aspartate 155. Lysine 195 acts as the Proton acceptor in catalysis.

This sequence belongs to the class I-like SAM-binding methyltransferase superfamily. RNA methyltransferase RlmE family.

It is found in the cytoplasm. It catalyses the reaction uridine(2552) in 23S rRNA + S-adenosyl-L-methionine = 2'-O-methyluridine(2552) in 23S rRNA + S-adenosyl-L-homocysteine + H(+). Functionally, specifically methylates the uridine in position 2552 of 23S rRNA at the 2'-O position of the ribose in the fully assembled 50S ribosomal subunit. The polypeptide is Ribosomal RNA large subunit methyltransferase E (Brucella abortus (strain S19)).